The sequence spans 130 residues: Ribosome biogenesis inhibitor MINAS-60 (130 aa).

A disordered region spans residues 61-130 (SRVRRIPTRP…RRRRPVTSSC (70 aa)). The segment covering 109–130 (KGRRRRRRRMRRRRRRPVTSSC) has biased composition (basic residues).

As to quaternary structure, interacts with 60S ribosome assembly factors GTPBP4 and MRTO4.

It is found in the nucleus. The protein resides in the nucleolus. Acts as a late-stage inhibitor of pre-60S ribosome assembly by preventing pre-60S ribosome export from nucleus. The sequence is that of Ribosome biogenesis inhibitor MINAS-60 from Homo sapiens (Human).